We begin with the raw amino-acid sequence, 404 residues long: Argininosuccinate synthase (404 aa).

15 to 23 provides a ligand contact to ATP; that stretch reads AYSGGLDTS. Residue Tyr94 participates in L-citrulline binding. ATP is bound at residue Gly124. Positions 126, 130, and 131 each coordinate L-aspartate. Position 130 (Asn130) interacts with L-citrulline. Residues Arg134, Ser182, Glu266, and Tyr278 each contribute to the L-citrulline site.

This sequence belongs to the argininosuccinate synthase family. Type 1 subfamily. As to quaternary structure, homotetramer.

It localises to the cytoplasm. The enzyme catalyses L-citrulline + L-aspartate + ATP = 2-(N(omega)-L-arginino)succinate + AMP + diphosphate + H(+). It participates in amino-acid biosynthesis; L-arginine biosynthesis; L-arginine from L-ornithine and carbamoyl phosphate: step 2/3. This Streptomyces avermitilis (strain ATCC 31267 / DSM 46492 / JCM 5070 / NBRC 14893 / NCIMB 12804 / NRRL 8165 / MA-4680) protein is Argininosuccinate synthase.